The sequence spans 287 residues: Very long chain fatty acid elongase 4 (287 aa).

3 consecutive transmembrane segments (helical) span residues 33-53 (ILVY…EHIM), 64-84 (PFVF…YSCV), and 115-135 (FWVF…VFLV). The HxxHH motif motif lies at 145–149 (HWYHH). The Nucleophile role is filled by His-148. The next 4 membrane-spanning stretches (helical) occupy residues 150–170 (LTVA…GLWF), 172–192 (TMNY…ACGM), 199–219 (IAPF…LIVL), and 241–261 (LGLV…GKLY).

The protein belongs to the ELO family.

It is found in the membrane. It carries out the reaction a very-long-chain acyl-CoA + malonyl-CoA + H(+) = a very-long-chain 3-oxoacyl-CoA + CO2 + CoA. In terms of biological role, involved in the synthesis of fatty acids. Elongates C16:0 and C18:0 fatty acids to C26:0, with C24:0 being the main product. The sequence is that of Very long chain fatty acid elongase 4 from Trypanosoma cruzi (strain CL Brener).